We begin with the raw amino-acid sequence, 846 residues long: MAEITVGQLAQQTNKEVDALLKQLKSFGIEKSSEKDTLTPAEMKTLLEKINSAKNTATRKKVTSVKLDGKHKINVSVKRKRRVAKKVEQQESTTLEQPQELETMVQEVSQQVDIVKGQDNIEQIVENKEAVKVQEQRQAEIAKPVIKDSGFKITAMPEIKIEEIVTEDDEGLSASDKQAKKKAAKKVFSEAVNTNTKYKREEEEKKSKAKKAGGKGFKKANPRQLSQLAGDLESFDEFGAKKGKLKAPKVKKQEFTKPVENTVRTVEIHEGITVSELAQKMAVKGAEIVKVLFNMGVMATINQSLDQDTAILIVEEMGHKYTLHNENALEEAVTTVDRSSYKKISRAPVVTIMGHVDHGKTSLLDYIRQTRVVAGEAGGITQHIGAYSVKTDKGSITFLDTPGHEAFTSMRARGAKSTDIVILVVAADDGVMPQTEEAIQHAKAARVPIVVAVNKIDKPEADPDKVISELAQRNVIPESWGGDVMFVNVSAKTGEGVADLLEAVLLQSEVLELEAFAEGLAEGVVIESRLEKGRGPVATVLVQNGNLKQGDNILCGTEYGRVRAMHNDLGKKIKAAGPATPVEILGLSGVPAAGDEMVVIENEKKAKELAAQRSQKQKEAKIAQEQSLKLSNMFNNMGKEGEQQVLKIILKGDVQGSVEAIRESLLKLSTDEVKVDIIASGIGAITSSDVTLAVASTAVVIGFNVRADSAAKKLAETDGVEFRYYNIIYDLIDDVKKAMSGLLSPEMKEQIIGIAEVREVYRSSKFGSIAGCMVIEGVVKRTNPIRVLRNNVVIYEGTLESLKRFKDDASEVKKGLECGIGVKNYNDVREGDQIEVFEVIEVAKEL.

The interval 198 to 219 (YKREEEEKKSKAKKAGGKGFKK) is disordered. The span at 207-219 (SKAKKAGGKGFKK) shows a compositional bias: basic residues. The 168-residue stretch at 345-512 (SRAPVVTIMG…AVLLQSEVLE (168 aa)) folds into the tr-type G domain. The tract at residues 354–361 (GHVDHGKT) is G1. 354–361 (GHVDHGKT) serves as a coordination point for GTP. The interval 379–383 (GITQH) is G2. A G3 region spans residues 400–403 (DTPG). Residues 400 to 404 (DTPGH) and 454 to 457 (NKID) contribute to the GTP site. The segment at 454 to 457 (NKID) is G4. Residues 490–492 (SAK) form a G5 region.

Belongs to the TRAFAC class translation factor GTPase superfamily. Classic translation factor GTPase family. IF-2 subfamily.

The protein localises to the cytoplasm. Functionally, one of the essential components for the initiation of protein synthesis. Protects formylmethionyl-tRNA from spontaneous hydrolysis and promotes its binding to the 30S ribosomal subunits. Also involved in the hydrolysis of GTP during the formation of the 70S ribosomal complex. The sequence is that of Translation initiation factor IF-2 from Francisella tularensis subsp. novicida (strain U112).